We begin with the raw amino-acid sequence, 236 residues long: Biosynthetic peptidoglycan transglycosylase (236 aa).

The chain crosses the membrane as a helical span at residues 12 to 31 (ALLWFAAGSIAVVLVLRWVP).

It belongs to the glycosyltransferase 51 family.

Its subcellular location is the cell inner membrane. The catalysed reaction is [GlcNAc-(1-&gt;4)-Mur2Ac(oyl-L-Ala-gamma-D-Glu-L-Lys-D-Ala-D-Ala)](n)-di-trans,octa-cis-undecaprenyl diphosphate + beta-D-GlcNAc-(1-&gt;4)-Mur2Ac(oyl-L-Ala-gamma-D-Glu-L-Lys-D-Ala-D-Ala)-di-trans,octa-cis-undecaprenyl diphosphate = [GlcNAc-(1-&gt;4)-Mur2Ac(oyl-L-Ala-gamma-D-Glu-L-Lys-D-Ala-D-Ala)](n+1)-di-trans,octa-cis-undecaprenyl diphosphate + di-trans,octa-cis-undecaprenyl diphosphate + H(+). The protein operates within cell wall biogenesis; peptidoglycan biosynthesis. Its function is as follows. Peptidoglycan polymerase that catalyzes glycan chain elongation from lipid-linked precursors. In Pseudomonas entomophila (strain L48), this protein is Biosynthetic peptidoglycan transglycosylase.